Consider the following 436-residue polypeptide: GTPase Der (436 aa).

EngA-type G domains are found at residues 4–167 (PIVA…DEET) and 176–351 (IRLS…ENHK). Residues 10-17 (GRPNVGKS), 57-61 (DTGGI), 119-122 (NKVD), 182-189 (GRPNVGKS), 229-233 (DTAGM), and 294-297 (NKWD) each bind GTP. One can recognise a KH-like domain in the interval 352-436 (KRVQSSTLNE…PIHIIPRRRN (85 aa)).

This sequence belongs to the TRAFAC class TrmE-Era-EngA-EngB-Septin-like GTPase superfamily. EngA (Der) GTPase family. As to quaternary structure, associates with the 50S ribosomal subunit.

Its function is as follows. GTPase that plays an essential role in the late steps of ribosome biogenesis. This is GTPase Der from Staphylococcus haemolyticus (strain JCSC1435).